A 141-amino-acid chain; its full sequence is Large ribosomal subunit protein uL11 (141 aa).

It belongs to the universal ribosomal protein uL11 family. Part of the ribosomal stalk of the 50S ribosomal subunit. Interacts with L10 and the large rRNA to form the base of the stalk. L10 forms an elongated spine to which L12 dimers bind in a sequential fashion forming a multimeric L10(L12)X complex. Post-translationally, one or more lysine residues are methylated.

Functionally, forms part of the ribosomal stalk which helps the ribosome interact with GTP-bound translation factors. The sequence is that of Large ribosomal subunit protein uL11 from Synechococcus sp. (strain CC9311).